Consider the following 372-residue polypeptide: Glycerophosphodiester phosphodiesterase GDPD6 (372 aa).

The first 21 residues, 1 to 21, serve as a signal peptide directing secretion; it reads MAFKYLLPLLLLSLLVANCAS. Positions 32–58 are disordered; that stretch reads KHATKKPLQTSRPYNLAHRGSNGELPE. One can recognise a GP-PDE domain in the interval 44–362; sequence PYNLAHRGSN…DFTGSLHNYQ (319 aa). 3 N-linked (GlcNAc...) asparagine glycosylation sites follow: asparagine 120, asparagine 239, and asparagine 260.

This sequence belongs to the glycerophosphoryl diester phosphodiesterase family. As to expression, expressed in flowers and siliques.

It carries out the reaction a sn-glycero-3-phosphodiester + H2O = an alcohol + sn-glycerol 3-phosphate + H(+). The polypeptide is Glycerophosphodiester phosphodiesterase GDPD6 (Arabidopsis thaliana (Mouse-ear cress)).